The sequence spans 60 residues: Potassium channel toxin Tst-beta-KTx (60 aa).

The region spanning glutamine 26 to aspartate 60 is the BetaSPN-type CS-alpha/beta domain. Intrachain disulfides connect cysteine 29/cysteine 50, cysteine 36/cysteine 55, and cysteine 40/cysteine 57.

It belongs to the long chain scorpion toxin family. Class 1 subfamily. In terms of tissue distribution, expressed by the venom gland.

The protein localises to the secreted. In terms of biological role, inhibits voltage-gated potassium channels Kv1.1/KCNA1, Kv1.2/KCNA2, and Kv1.3/KCNA3. Does not induce hemolytic activity, lactate dehydrogenase (LDH) release from mast cells, mast cell degranulation, and antimicrobial effects. In vivo, injection into mice causes moderate edema formation, but induces very weak or no change in nociceptive sensibility. It also reduces mice locomotion, suggesting an increase in anxiety, but causes no alteration in rearing (standing on hind limbs). In Tityus stigmurus (Brazilian scorpion), this protein is Potassium channel toxin Tst-beta-KTx.